Consider the following 478-residue polypeptide: Transposase for insertion sequence element IS231D (478 aa).

Belongs to the transposase 11 family.

Involved in the transposition of the insertion sequence. This Bacillus thuringiensis subsp. finitimus protein is Transposase for insertion sequence element IS231D.